Reading from the N-terminus, the 292-residue chain is ATP synthase gamma chain (292 aa).

This sequence belongs to the ATPase gamma chain family. In terms of assembly, F-type ATPases have 2 components, CF(1) - the catalytic core - and CF(0) - the membrane proton channel. CF(1) has five subunits: alpha(3), beta(3), gamma(1), delta(1), epsilon(1). CF(0) has three main subunits: a, b and c.

It is found in the cell inner membrane. Produces ATP from ADP in the presence of a proton gradient across the membrane. The gamma chain is believed to be important in regulating ATPase activity and the flow of protons through the CF(0) complex. The chain is ATP synthase gamma chain from Brucella ovis (strain ATCC 25840 / 63/290 / NCTC 10512).